The following is a 600-amino-acid chain: MASNHKSSAARPVSRGGVGLTGRPPSGIRPLSGNIRVATAMPPGTARPGSRGCPIGTGGVLSSQIKVAHRPVTQQGLTGMKTGTKGPQRQILDKSYYLGLLRSKISELTTEVNKLQKGIEMYNQENSVYLSYEKRAETLAVEIKELQGQLADYNMLVDKLNTNTEMEEVMNDYNMLKAQNDRETQSLDVIFTERQAKEKQIRSVEEEIEQEKQATDDIIKNMSFENQVKYLEMKTTNEKLLQELDTLQQQLDSQNMKKESLEAEIAHSQVKQEAVLLHEKLYELESHRDQMIAEDKSIGSPMEEREKLLKQIKDDNQEIASMERQLTDTKEKINQFIEEIRQLDMDLEEHQGEMNQKYKELKKREEHMDTFIETFEETKNQELKRKAQIEANIVALLEHCSRNINRIEQISSITNQELKMMQDDLNFKSTEVQKSQSTAQNLTSDIQRLQLDLQKMELLESKMTEEQHSLKSKIKQMTTDLEIYNDLPALKSSGEEKIKKLHQERMILSTHRNAFKKIMEKQNIEYEALKTQLQENETHSQLTNLERKWQHLEQNNFAMKEFIATKSQESDYQPIKKNVTKQIAEYNKTIVDALHSTSGN.

Residues 1–33 form a disordered region; it reads MASNHKSSAARPVSRGGVGLTGRPPSGIRPLSG. A basic region region spans residues 1–90; the sequence is MASNHKSSAA…KTGTKGPQRQ (90 aa). R51 is modified (omega-N-methylarginine). T73 is modified (phosphothreonine). A coiled-coil region spans residues 98–482; the sequence is LGLLRSKISE…KIKQMTTDLE (385 aa). Residues 561–600 are important for interaction with IFT27; sequence EFIATKSQESDYQPIKKNVTKQIAEYNKTIVDALHSTSGN.

It belongs to the IFT74 family. Component of the IFT complex B, at least composed of IFT20, IFT22, IFT25, IFT27, IFT46, IFT52, TRAF3IP1/IFT54, IFT57, IFT74, IFT80, IFT81, and IFT88. Interacts with IFT81; the interaction is direct. Within the IFT complex B, IFT74 and IFT81 mediate the transport of tubulin within the cilium. Interacts (via basic region) with beta-tubulin (via acidic region); interaction is direct. Interacts with ARL13B and IFT88. Interacts (via the IFT74/IFT81 heterodimer) with RABL2B. Interacts with IFT57 and IFT70B. In terms of tissue distribution, highly expressed in adult and fetal kidney and expressed at lower level in adult heart, placenta, lung, liver and pancreas, and in fetal heart, lung and liver. Little to no expression was detected in adult brain and skeletal muscle or in fetal brain, thymus and spleen. Detected in sperm (at protein level).

The protein resides in the cell projection. It is found in the cilium. Its subcellular location is the cytoplasmic vesicle. It localises to the flagellum. The protein localises to the secretory vesicle. The protein resides in the acrosome. In terms of biological role, component of the intraflagellar transport (IFT) complex B: together with IFT81, forms a tubulin-binding module that specifically mediates transport of tubulin within the cilium. Binds beta-tubulin via its basic region. Required for ciliogenesis. Essential for flagellogenesis during spermatogenesis. This chain is Intraflagellar transport protein 74 homolog (IFT74), found in Homo sapiens (Human).